The following is a 446-amino-acid chain: Tubulin beta-3 chain (446 aa).

GTP is bound by residues glutamine 11, glutamate 69, serine 138, glycine 142, threonine 143, glycine 144, asparagine 204, and asparagine 226. Glutamate 69 is a Mg(2+) binding site. The tract at residues 421-446 is disordered; it reads EYQQYQDATAEEEDYEEEEEDEEVAA. Residues 429-446 show a composition bias toward acidic residues; sequence TAEEEDYEEEEEDEEVAA.

Belongs to the tubulin family. As to quaternary structure, dimer of alpha and beta chains. A typical microtubule is a hollow water-filled tube with an outer diameter of 25 nm and an inner diameter of 15 nM. Alpha-beta heterodimers associate head-to-tail to form protofilaments running lengthwise along the microtubule wall with the beta-tubulin subunit facing the microtubule plus end conferring a structural polarity. Microtubules usually have 13 protofilaments but different protofilament numbers can be found in some organisms and specialized cells. Requires Mg(2+) as cofactor. As to expression, expressed in roots, second node, leaf sheaths, and suspension cultured cells.

The protein resides in the cytoplasm. It is found in the cytoskeleton. Functionally, tubulin is the major constituent of microtubules, a cylinder consisting of laterally associated linear protofilaments composed of alpha- and beta-tubulin heterodimers. Microtubules grow by the addition of GTP-tubulin dimers to the microtubule end, where a stabilizing cap forms. Below the cap, tubulin dimers are in GDP-bound state, owing to GTPase activity of alpha-tubulin. In Oryza sativa subsp. japonica (Rice), this protein is Tubulin beta-3 chain (TUBB3).